A 185-amino-acid chain; its full sequence is Ribosome-recycling factor (185 aa).

The disordered stretch occupies residues 142–165 (IVKDGDAGEDEGSRAEKELDGLTK).

It belongs to the RRF family.

It localises to the cytoplasm. Its function is as follows. Responsible for the release of ribosomes from messenger RNA at the termination of protein biosynthesis. May increase the efficiency of translation by recycling ribosomes from one round of translation to another. This chain is Ribosome-recycling factor, found in Renibacterium salmoninarum (strain ATCC 33209 / DSM 20767 / JCM 11484 / NBRC 15589 / NCIMB 2235).